Here is a 417-residue protein sequence, read N- to C-terminus: Acetate kinase (417 aa).

Residue asparagine 9 coordinates Mg(2+). Lysine 16 contributes to the ATP binding site. Residue arginine 90 coordinates substrate. The Proton donor/acceptor role is filled by aspartate 147. Residues 207–211 (HIGNG), 282–284 (DLR), and 330–334 (GIGEN) contribute to the ATP site. A Mg(2+)-binding site is contributed by glutamate 384.

Belongs to the acetokinase family. In terms of assembly, homodimer. Requires Mg(2+) as cofactor. The cofactor is Mn(2+).

It localises to the cytoplasm. It catalyses the reaction acetate + ATP = acetyl phosphate + ADP. The protein operates within metabolic intermediate biosynthesis; acetyl-CoA biosynthesis; acetyl-CoA from acetate: step 1/2. In terms of biological role, catalyzes the formation of acetyl phosphate from acetate and ATP. Can also catalyze the reverse reaction. The protein is Acetate kinase of Staphylococcus epidermidis (strain ATCC 35984 / DSM 28319 / BCRC 17069 / CCUG 31568 / BM 3577 / RP62A).